The primary structure comprises 607 residues: Pogo transposable element with KRAB domain (607 aa).

Residues 8–29 (LNLTLKEEQKEEEVEIQELEDG) adopt a coiled-coil conformation. Lys-13 participates in a covalent cross-link: Glycyl lysine isopeptide (Lys-Gly) (interchain with G-Cter in SUMO2). In terms of domain architecture, KRAB spans 47 to 118 (ALFDEVAIYF…DEWRLQGVTF (72 aa)). Residues 250–323 (AFRGPKNGRF…MRRYDLSLRH (74 aa)) form the HTH CENPB-type domain. The DDE-1 domain maps to 355-567 (YEVAQMGNAD…ISSESIVQGF (213 aa)). Lys-384 is covalently cross-linked (Glycyl lysine isopeptide (Lys-Gly) (interchain with G-Cter in SUMO2)). The interval 588 to 607 (GELPKEPPKECGPESVAEGD) is disordered. Residues 589–599 (ELPKEPPKECG) show a composition bias toward basic and acidic residues.

The protein resides in the nucleus. This is Pogo transposable element with KRAB domain (Pogk) from Mus musculus (Mouse).